A 342-amino-acid polypeptide reads, in one-letter code: MNTNDFDFELPEELIAQTPLEKRDSSKLLIIDHRQKTMVDSHFDHIIDQLNPGDALVMNNTRVLPARLYGEKTDTHGHVELLLLKNTQGDQWEVLAKPAKRLKVGSQVNFGDGHLKATIIDELEHGGRIVEFSYDGIFLEVLESLGEMPLPPYIHEKLEDAERYQTVYAKENGSAAAPTAGLHFTTDLLKKIEAKGVHLVYLTLHVGLGTFRPVSVDNLDEHDMHSEFYSLSEEAAQTLRDVKQAGGRVVAVGTTSIRTLETIGSKFQGDIQADSGWTNIFIKPGYQFKVVDAFSTNFHLPKSTLVMLVSAFAGRDFVLEAYRHAVDEKYRFFSFGDAMFVN.

This sequence belongs to the QueA family. Monomer.

Its subcellular location is the cytoplasm. It carries out the reaction 7-aminomethyl-7-carbaguanosine(34) in tRNA + S-adenosyl-L-methionine = epoxyqueuosine(34) in tRNA + adenine + L-methionine + 2 H(+). It participates in tRNA modification; tRNA-queuosine biosynthesis. Functionally, transfers and isomerizes the ribose moiety from AdoMet to the 7-aminomethyl group of 7-deazaguanine (preQ1-tRNA) to give epoxyqueuosine (oQ-tRNA). This chain is S-adenosylmethionine:tRNA ribosyltransferase-isomerase, found in Streptococcus pyogenes serotype M49 (strain NZ131).